The sequence spans 233 residues: Bcl-2-like protein 1 (233 aa).

Positions 4–24 match the BH4 motif; it reads SNRELVVDFLSYKLSQKGYSW. Residues 27–73 form a disordered region; the sequence is FSDVEENRTEAPEETEPERETPSAINGNPSWHLADSPAVNGATGHSS. Phosphoserine; by PLK3 is present on S49. Position 62 is a phosphoserine; by CDK1 (S62). The BH3 signature appears at 86 to 100; the sequence is VKQALREAGDEFELR. The BH1 signature appears at 129–148; that stretch reads ELFRDGVNWGRIVAFFSFGG. Residues 180-195 carry the BH2 motif; that stretch reads PWIQENGGWDTFVDLY. A helical transmembrane segment spans residues 210–226; sequence FNRWFLTGMTVAGVVLL.

The protein belongs to the Bcl-2 family. As to quaternary structure, homodimer. Interacts with BCL2L11. Interacts with BAD. Interacts with PGAM5. Interacts with HEBP2. Interacts with p53/TP53 and BBC3; interaction with BBC3 disrupts the interaction with p53/TP53. Interacts with ATP5F1A and ATP5F1B; the interactions mediate the association of isoform Bcl-X(L) with the mitochondrial membrane ATP synthase F(1)F(0) ATP synthase. Interacts with VDAC1. Interacts with BCL2L11 (via BH3). Interacts with RNF183. Interacts with GIMAP3/IAN4 and GIMAP5/IAN5. Interacts with GIMAP5 and HSPA8/HSC70; the interaction between HSPA8 and BCL2L1 is impaired in the absence of GIMAP5. Interacts with isoform 4 of CLU; this interaction releases and activates BAX and promotes cell death. Forms heterodimers with BAX, BAK or BCL2; heterodimerization with BAX does not seem to be required for anti-apoptotic activity. Interacts with isoform 1 of SIVA1; the interaction inhibits the anti-apoptotic activity. Interacts with IKZF3. Interacts with RTL10/BOP. Interacts with DNM1L and CLTA; DNM1L and BCL2L1 isoform BCL-X(L) may form a complex in synaptic vesicles that also contains clathrin and MFF. Interacts (via the loop between motifs BH4 and BH3) with NLRP1 (via LRR repeats), but not with NLRP2, NLRP3, NLRP4, PYCARD, nor MEFV. Interacts with BECN1. Proteolytically cleaved by caspases during apoptosis. The cleaved protein, lacking the BH4 motif, has pro-apoptotic activity. In terms of processing, phosphorylated on Ser-62 by CDK1. This phosphorylation is partial in normal mitotic cells, but complete in G2-arrested cells upon DNA-damage, thus promoting subsequent apoptosis probably by triggering caspases-mediated proteolysis. Phosphorylated by PLK3, leading to regulate the G2 checkpoint and progression to cytokinesis during mitosis. Phosphorylation at Ser-49 appears during the S phase and G2, disappears rapidly in early mitosis during prometaphase, metaphase and early anaphase, and re-appears during telophase and cytokinesis. Post-translationally, ubiquitinated by RNF183 during prolonged ER stress, leading to degradation by the proteosome. As to expression, expressed in most tissues. Bcl-X(beta) is specifically expressed in cerebellum, heart, and thymus. In the ovary, the predominant form is Bcl-X(L), with a small but detectable level of Bcl-X(S).

The protein resides in the mitochondrion inner membrane. It is found in the mitochondrion outer membrane. It localises to the mitochondrion matrix. The protein localises to the cytoplasmic vesicle. Its subcellular location is the secretory vesicle. The protein resides in the synaptic vesicle membrane. It is found in the cytoplasm. It localises to the cytosol. The protein localises to the cytoskeleton. Its subcellular location is the microtubule organizing center. The protein resides in the centrosome. It is found in the nucleus membrane. Functionally, potent inhibitor of cell death. Inhibits activation of caspases. Appears to regulate cell death by blocking the voltage-dependent anion channel (VDAC) by binding to it and preventing the release of the caspase activator, CYC1, from the mitochondrial membrane. Also acts as a regulator of G2 checkpoint and progression to cytokinesis during mitosis. In terms of biological role, isoform Bcl-X(L) also regulates presynaptic plasticity, including neurotransmitter release and recovery, number of axonal mitochondria as well as size and number of synaptic vesicle clusters. During synaptic stimulation, increases ATP availability from mitochondria through regulation of mitochondrial membrane ATP synthase F(1)F(0) activity and regulates endocytic vesicle retrieval in hippocampal neurons through association with DMN1L and stimulation of its GTPase activity in synaptic vesicles. May attenuate inflammation impairing NLRP1-inflammasome activation, hence CASP1 activation and IL1B release. Its function is as follows. Isoform Bcl-X(S) promotes apoptosis. In Rattus norvegicus (Rat), this protein is Bcl-2-like protein 1 (Bcl2l1).